Reading from the N-terminus, the 270-residue chain is Putative pyruvate, phosphate dikinase regulatory protein (270 aa).

Gly148–Thr155 provides a ligand contact to ADP.

This sequence belongs to the pyruvate, phosphate/water dikinase regulatory protein family. PDRP subfamily.

The enzyme catalyses N(tele)-phospho-L-histidyl/L-threonyl-[pyruvate, phosphate dikinase] + ADP = N(tele)-phospho-L-histidyl/O-phospho-L-threonyl-[pyruvate, phosphate dikinase] + AMP + H(+). It catalyses the reaction N(tele)-phospho-L-histidyl/O-phospho-L-threonyl-[pyruvate, phosphate dikinase] + phosphate + H(+) = N(tele)-phospho-L-histidyl/L-threonyl-[pyruvate, phosphate dikinase] + diphosphate. In terms of biological role, bifunctional serine/threonine kinase and phosphorylase involved in the regulation of the pyruvate, phosphate dikinase (PPDK) by catalyzing its phosphorylation/dephosphorylation. This is Putative pyruvate, phosphate dikinase regulatory protein from Bacillus cereus (strain 03BB102).